An 89-amino-acid chain; its full sequence is DNA/RNA-binding protein Alba 2 (89 aa).

An N6-acetyllysine modification is found at Lys-12. Lys-14, Asp-18, and Asp-22 together coordinate Zn(2+).

The protein belongs to the histone-like Alba family. Forms homodimers and homotetramers. Homodimer at pH below 6.0. Forms homotetramers and higher order homooligomers at near the growth temperature of 80 degrees Celsius and pH 7.0. Interacts with Alba 1; heterodimers lack cooperative DNA-binding behavior and result in more compact chromatin structures compared to Alba 1 homodimers. Acetylated. Acetylation at Lys-12 decreases DNA-binding affinity.

It is found in the cytoplasm. Its subcellular location is the chromosome. In terms of biological role, binds single-stranded DNA, RNA and double-stranded DNA. Involved in DNA compaction. The chain is DNA/RNA-binding protein Alba 2 from Saccharolobus solfataricus (strain ATCC 35092 / DSM 1617 / JCM 11322 / P2) (Sulfolobus solfataricus).